A 242-amino-acid polypeptide reads, in one-letter code: E3 ubiquitin-protein ligase ZNRF2 (242 aa).

Positions 1 to 141 are disordered; that stretch reads MGAKQSGPAA…VGGSPGGPRL (141 aa). Residue Gly2 is the site of N-myristoyl glycine attachment. Phosphoserine occurs at positions 19, 21, and 25. Residues 19-29 show a composition bias toward low complexity; the sequence is SGSDLPSSSSG. Residues 30–41 are compositionally biased toward gly residues; that stretch reads GANGTAGGGGGA. The span at 59-97 shows a compositional bias: low complexity; it reads PSASGGAAAAAAAPAAPAAPRSRSLGGAVGSVASGARAA. Ser82, Ser89, Ser113, Ser116, and Ser135 each carry phosphoserine. The segment covering 99-118 has biased composition (polar residues); sequence SPFSIPNSSSGPYGSQDSVH. Position 145 is a phosphoserine; by MTOR (Ser145). Ser151 and Ser193 each carry phosphoserine. The RING-type; atypical zinc finger occupies 199-240; that stretch reads CAICLEELQQGDTIARLPCLCIYHKGCIDEWFEVNRSCPEHP.

As to quaternary structure, interacts with UBE2N. Interacts with ZNRF1. Interacts (when phosphorylated) with YWHAE. In terms of processing, phosphorylated; leading to binding to YWHAE. Phosphorylated by MTOR at Ser-145 and dephosphorylated by PP6C. Ser-145 phosphorylation stimulates vesicle-to-cytosol translocation. Highly expressed in the brain, with higher expression during development than in adult. Expressed also in mammary glands, testis, colon and kidney.

The protein localises to the endosome membrane. It is found in the lysosome membrane. Its subcellular location is the presynaptic cell membrane. It localises to the cytoplasm. The catalysed reaction is S-ubiquitinyl-[E2 ubiquitin-conjugating enzyme]-L-cysteine + [acceptor protein]-L-lysine = [E2 ubiquitin-conjugating enzyme]-L-cysteine + N(6)-ubiquitinyl-[acceptor protein]-L-lysine.. The protein operates within protein modification; protein ubiquitination. Its function is as follows. E3 ubiquitin-protein ligase that plays a role in the establishment and maintenance of neuronal transmission and plasticity. Ubiquitinates the Na(+)/K(+) ATPase alpha-1 subunit/ATP1A1 and thereby influences its endocytosis and/or degradation. Acts also as a positive regulator of mTORC1 activation by amino acids, which functions upstream of the V-ATPase and of Rag-GTPases. In turn, phosphorylation by mTOR leads to its inhibition via targeting to the cytosol allowing a self-regulating feedback mechanism. The chain is E3 ubiquitin-protein ligase ZNRF2 (ZNRF2) from Homo sapiens (Human).